The sequence spans 90 residues: uncharacterized protein (90 aa).

Residues 1 to 18 (MSRALFAVVLAFPLIALA) form the signal peptide.

This is an uncharacterized protein from Escherichia coli (strain K12).